We begin with the raw amino-acid sequence, 172 residues long: MAVKIKLQRMGKIRNAEYRVIVADARTRRSGKAIENIGIYQPKQEPSLIQIDSERAQYWLGVGAQPTEPVLALLKVTGDWQKFKGLPGAEGTLKVAEEKPSKLDLFNAALAEANNGPTIEAITEKKRKAKEEAEAKAAAEKAAEEAAAAEAAKAEEEAAKAEEADSAEESAE.

The interval 125-172 is disordered; sequence KKRKAKEEAEAKAAAEKAAEEAAAAEAAKAEEEAAKAEEADSAEESAE. Basic and acidic residues-rich tracts occupy residues 129-144 and 152-163; these read AKEEAEAKAAAEKAAE and AKAEEEAAKAEE.

It belongs to the bacterial ribosomal protein bS16 family.

This is Small ribosomal subunit protein bS16 from Corynebacterium aurimucosum (strain ATCC 700975 / DSM 44827 / CIP 107346 / CN-1) (Corynebacterium nigricans).